We begin with the raw amino-acid sequence, 95 residues long: Co-chaperonin GroES (95 aa).

This sequence belongs to the GroES chaperonin family. Heptamer of 7 subunits arranged in a ring. Interacts with the chaperonin GroEL.

The protein localises to the cytoplasm. In terms of biological role, together with the chaperonin GroEL, plays an essential role in assisting protein folding. The GroEL-GroES system forms a nano-cage that allows encapsulation of the non-native substrate proteins and provides a physical environment optimized to promote and accelerate protein folding. GroES binds to the apical surface of the GroEL ring, thereby capping the opening of the GroEL channel. This chain is Co-chaperonin GroES, found in Stenotrophomonas maltophilia (strain K279a).